Consider the following 203-residue polypeptide: Probable deoxycytidylate deaminase (203 aa).

In terms of domain architecture, CMP/dCMP-type deaminase spans 27–163 (HWDDYFMATS…PTYRASKRML (137 aa)). Residue His102 coordinates Zn(2+). Catalysis depends on Glu104, which acts as the Proton donor. Residues Cys128 and Cys131 each coordinate Zn(2+).

It belongs to the cytidine and deoxycytidylate deaminase family. Requires Zn(2+) as cofactor.

The enzyme catalyses dCMP + H2O + H(+) = dUMP + NH4(+). In terms of biological role, supplies the nucleotide substrate for thymidylate synthetase. The sequence is that of Probable deoxycytidylate deaminase from Drosophila melanogaster (Fruit fly).